The primary structure comprises 63 residues: Synergistic-type venom protein C9S3, chain 2 (63 aa).

3 cysteine pairs are disulfide-bonded: Cys3–Cys24, Cys17–Cys42, and Cys46–Cys57.

The protein belongs to the three-finger toxin family. Short-chain subfamily. Aminergic toxin sub-subfamily. In terms of assembly, heterodimer of C9S3 chain 1 (AC P01408) and chain 2, linked by at least two disulfide bonds. Expressed by the venom gland.

Its subcellular location is the secreted. This protein shows a synergetic toxic effect in that it enhances the toxicity of other D.angusticeps toxins. The chain is Synergistic-type venom protein C9S3, chain 2 from Dendroaspis angusticeps (Eastern green mamba).